A 449-amino-acid polypeptide reads, in one-letter code: Agmatine hydroxycinnamoyltransferase 1 (449 aa).

Residues H153 and D392 each act as proton acceptor in the active site.

It belongs to the plant acyltransferase family. In terms of tissue distribution, highly expressed in roots. Expressed at low levels in flowers.

Hydroxycinnamoyl transferase that catalyzes the transfer of an acyl from p-coumaryol-CoA to agmatine, to produce coumaroyl agmatine. Can use feruloyl-CoA, caffeoyl-CoA and sinapoyl-CoA as acyl donors. Seems to be able to transfer the acyl group from p-coumaroyl-CoA and feruloyl-CoA to the acyl acceptors putrescine and spermidine. The chain is Agmatine hydroxycinnamoyltransferase 1 from Oryza sativa subsp. japonica (Rice).